The sequence spans 227 residues: 2,3-bisphosphoglycerate-dependent phosphoglycerate mutase (227 aa).

Substrate is bound by residues 8-15 (RHGKSVWN), 21-22 (TG), Arg-58, 110-113 (ERMY), Lys-121, 137-138 (RR), and 181-182 (GN). Catalysis depends on His-9, which acts as the Tele-phosphohistidine intermediate. The active-site Proton donor/acceptor is the Glu-110.

This sequence belongs to the phosphoglycerate mutase family. BPG-dependent PGAM subfamily.

The catalysed reaction is (2R)-2-phosphoglycerate = (2R)-3-phosphoglycerate. It participates in carbohydrate degradation; glycolysis; pyruvate from D-glyceraldehyde 3-phosphate: step 3/5. Its function is as follows. Catalyzes the interconversion of 2-phosphoglycerate and 3-phosphoglycerate. This chain is 2,3-bisphosphoglycerate-dependent phosphoglycerate mutase, found in Chlamydia caviae (strain ATCC VR-813 / DSM 19441 / 03DC25 / GPIC) (Chlamydophila caviae).